The sequence spans 195 residues: Interferon tau (195 aa).

The first 23 residues, M1–G23, serve as a signal peptide directing secretion. Cystine bridges form between C52–C162 and C87–C109.

Belongs to the alpha/beta interferon family. IFN-alphaII subfamily.

Its subcellular location is the secreted. Paracrine hormone primarily responsible for maternal recognition of pregnancy. Interacts with endometrial receptors, probably type I interferon receptors, and blocks estrogen receptor expression, preventing the estrogen-induced increase in oxytocin receptor expression in the endometrium. This results in the suppression of the pulsatile endometrial release of the luteolytic hormone prostaglandin F2-alpha, hindering the regression of the corpus luteum (luteolysis) and therefore a return to ovarian cyclicity. This, and a possible direct effect of IFN-tau on prostaglandin synthesis, leads in turn to continued ovarian progesterone secretion, which stimulates the secretion by the endometrium of the nutrients required for the growth of the conceptus. In summary, displays particularly high antiviral and antiproliferative potency concurrently with particular weak cytotoxicity, high antiluteolytic activity and immunomodulatory properties. In contrast with other IFNs, IFN-tau is not virally inducible. The polypeptide is Interferon tau (IFNT) (Giraffa camelopardalis (Giraffe)).